Here is a 310-residue protein sequence, read N- to C-terminus: 5-oxoprolinase subunit C (310 aa).

The protein belongs to the PxpC family. As to quaternary structure, forms a complex composed of PxpA, PxpB and PxpC.

The catalysed reaction is 5-oxo-L-proline + ATP + 2 H2O = L-glutamate + ADP + phosphate + H(+). In terms of biological role, catalyzes the cleavage of 5-oxoproline to form L-glutamate coupled to the hydrolysis of ATP to ADP and inorganic phosphate. The protein is 5-oxoprolinase subunit C of Escherichia coli (strain K12).